We begin with the raw amino-acid sequence, 501 residues long: Lysine--tRNA ligase (501 aa).

The Mg(2+) site is built by Glu411 and Glu418.

It belongs to the class-II aminoacyl-tRNA synthetase family. Homodimer. The cofactor is Mg(2+).

The protein resides in the cytoplasm. It carries out the reaction tRNA(Lys) + L-lysine + ATP = L-lysyl-tRNA(Lys) + AMP + diphosphate. The sequence is that of Lysine--tRNA ligase from Aliivibrio salmonicida (strain LFI1238) (Vibrio salmonicida (strain LFI1238)).